A 271-amino-acid polypeptide reads, in one-letter code: Hydroxyethylthiazole kinase (271 aa).

Methionine 46 provides a ligand contact to substrate. Positions 122 and 169 each coordinate ATP. Glycine 196 contacts substrate.

This sequence belongs to the Thz kinase family. Mg(2+) is required as a cofactor.

It catalyses the reaction 5-(2-hydroxyethyl)-4-methylthiazole + ATP = 4-methyl-5-(2-phosphooxyethyl)-thiazole + ADP + H(+). Its pathway is cofactor biosynthesis; thiamine diphosphate biosynthesis; 4-methyl-5-(2-phosphoethyl)-thiazole from 5-(2-hydroxyethyl)-4-methylthiazole: step 1/1. Its function is as follows. Catalyzes the phosphorylation of the hydroxyl group of 4-methyl-5-beta-hydroxyethylthiazole (THZ). This is Hydroxyethylthiazole kinase from Alkaliphilus oremlandii (strain OhILAs) (Clostridium oremlandii (strain OhILAs)).